Consider the following 80-residue polypeptide: Ubiquinol-cytochrome c reductase complex assembly factor 5 (80 aa).

Topologically, residues 1 to 19 (MFSRAQVRRALQRVPGKQR) are mitochondrial matrix. Residues 20-41 (FGIYRFLPFFFVLGGAMEWIMI) traverse the membrane as a helical segment. The Mitochondrial intermembrane segment spans residues 42–80 (KVRVGQETFYDVYRRKASERQYQRRLEDTSETNLHKLIK).

The protein belongs to the UQCC5 family. Associates with the mitochondrial ribosome. Interacts with UQCC6. Interacts with MT-CYB; interacts with newly synthesizes MT-CYB. Forms a complex, named COMB/coordinator of mitochondrial CYTB biogenesis, composed of UQCC1, UQCC2, UQCC4, UQCC5 and UQCC6; stabilizes nascent cytochrome b/MT-CYB and promotes its membrane insertion.

It is found in the mitochondrion inner membrane. In terms of biological role, required for the assembly and stability of the mitochondrial ubiquinol-cytochrome c reductase complex (complex III (CIII) or cytochrome b-c1 complex), a multisubunit transmembrane complex that is part of the mitochondrial electron transport chain (ETC) which drives oxidative phosphorylation. Mediates early complex III biogenesis. Participates in regulating the levels of electron transport chain proteins, and therefore energy supply, in response to changes in energy demand. Also required for cytochrome c oxidase complex (complex IV) assembly. The chain is Ubiquinol-cytochrome c reductase complex assembly factor 5 from Mus musculus (Mouse).